A 1139-amino-acid polypeptide reads, in one-letter code: Replication protein alpha-A (1139 aa).

The interval R60 to I438 is methyltransferase. In terms of domain architecture, Alphavirus-like MT spans S81–V305. A disordered region spans residues S611–E637. The segment covering S617–S627 has biased composition (low complexity). The 165-residue stretch at D805–K969 folds into the (+)RNA virus helicase ATP-binding domain. Positions L835–C1109 are helicase. G838–S845 provides a ligand contact to ATP. In terms of domain architecture, (+)RNA virus helicase C-terminal spans L970–V1139.

As to quaternary structure, interacts with the suppressor of RNA silencing Gamma-B (via C-terminus).

The protein localises to the host chloroplast envelope. The enzyme catalyses ATP + H2O = ADP + phosphate + H(+). Probably contains methyltransferase and helicase activities. Methyltransferase displays a cytoplasmic capping enzyme activity. This function is necessary since all viral RNAs are synthesized in the cytoplasm, and host capping enzymes are restricted to the nucleus. Helicase region probably exhibits NTPase and RNA unwinding activities. In Barley stripe mosaic virus (BSMV), this protein is Replication protein alpha-A.